The primary structure comprises 340 residues: Protein-arginine kinase (340 aa).

In terms of domain architecture, Phosphagen kinase C-terminal spans 21–242 (VVLSSRIRLA…EQIIMQERVA (222 aa)). Residues 24 to 28 (SSRIR), His-79, Arg-113, 164 to 168 (RASVM), and 195 to 200 (RGIYGE) each bind ATP.

This sequence belongs to the ATP:guanido phosphotransferase family.

It catalyses the reaction L-arginyl-[protein] + ATP = N(omega)-phospho-L-arginyl-[protein] + ADP + H(+). Functionally, catalyzes the specific phosphorylation of arginine residues in proteins. In Listeria monocytogenes serotype 4b (strain CLIP80459), this protein is Protein-arginine kinase.